Reading from the N-terminus, the 349-residue chain is UDP-N-acetylenolpyruvoylglucosamine reductase (349 aa).

The FAD-binding PCMH-type domain occupies 25–213; sequence VGPVARRLVT…VEQGERTDPQ (189 aa). R165 is an active-site residue. S242 functions as the Proton donor in the catalytic mechanism. The active site involves E341.

Belongs to the MurB family. Requires FAD as cofactor.

The protein localises to the cytoplasm. It carries out the reaction UDP-N-acetyl-alpha-D-muramate + NADP(+) = UDP-N-acetyl-3-O-(1-carboxyvinyl)-alpha-D-glucosamine + NADPH + H(+). It functions in the pathway cell wall biogenesis; peptidoglycan biosynthesis. Its function is as follows. Cell wall formation. The chain is UDP-N-acetylenolpyruvoylglucosamine reductase from Mycolicibacterium gilvum (strain PYR-GCK) (Mycobacterium gilvum (strain PYR-GCK)).